The following is a 112-amino-acid chain: Small ribosomal subunit protein bS6 (112 aa).

This sequence belongs to the bacterial ribosomal protein bS6 family.

In terms of biological role, binds together with bS18 to 16S ribosomal RNA. In Hyphomonas neptunium (strain ATCC 15444), this protein is Small ribosomal subunit protein bS6.